We begin with the raw amino-acid sequence, 282 residues long: Bifunctional protein FolD (282 aa).

NADP(+) is bound by residues 164-166 (GRS) and serine 189.

This sequence belongs to the tetrahydrofolate dehydrogenase/cyclohydrolase family. Homodimer.

It carries out the reaction (6R)-5,10-methylene-5,6,7,8-tetrahydrofolate + NADP(+) = (6R)-5,10-methenyltetrahydrofolate + NADPH. It catalyses the reaction (6R)-5,10-methenyltetrahydrofolate + H2O = (6R)-10-formyltetrahydrofolate + H(+). It functions in the pathway one-carbon metabolism; tetrahydrofolate interconversion. Functionally, catalyzes the oxidation of 5,10-methylenetetrahydrofolate to 5,10-methenyltetrahydrofolate and then the hydrolysis of 5,10-methenyltetrahydrofolate to 10-formyltetrahydrofolate. The protein is Bifunctional protein FolD of Lachnoclostridium phytofermentans (strain ATCC 700394 / DSM 18823 / ISDg) (Clostridium phytofermentans).